Reading from the N-terminus, the 346-residue chain is Holliday junction branch migration complex subunit RuvB (346 aa).

The segment at 4–184 (TDRLIAPTAK…FGIVQRLEFY (181 aa)) is large ATPase domain (RuvB-L). ATP is bound by residues Arg-24, Gly-65, Lys-68, Thr-69, Thr-70, 131–133 (EDF), Arg-174, Tyr-184, and Arg-221. Thr-69 serves as a coordination point for Mg(2+). The tract at residues 185-255 (NVKDLTHIVA…LADKALNMLN (71 aa)) is small ATPAse domain (RuvB-S). A head domain (RuvB-H) region spans residues 258–346 (ERGFDHMDRR…QESQGGEGIA (89 aa)). Residues Arg-294, Arg-313, and Arg-318 each contribute to the DNA site.

It belongs to the RuvB family. Homohexamer. Forms an RuvA(8)-RuvB(12)-Holliday junction (HJ) complex. HJ DNA is sandwiched between 2 RuvA tetramers; dsDNA enters through RuvA and exits via RuvB. An RuvB hexamer assembles on each DNA strand where it exits the tetramer. Each RuvB hexamer is contacted by two RuvA subunits (via domain III) on 2 adjacent RuvB subunits; this complex drives branch migration. In the full resolvosome a probable DNA-RuvA(4)-RuvB(12)-RuvC(2) complex forms which resolves the HJ.

It is found in the cytoplasm. It carries out the reaction ATP + H2O = ADP + phosphate + H(+). Functionally, the RuvA-RuvB-RuvC complex processes Holliday junction (HJ) DNA during genetic recombination and DNA repair, while the RuvA-RuvB complex plays an important role in the rescue of blocked DNA replication forks via replication fork reversal (RFR). RuvA specifically binds to HJ cruciform DNA, conferring on it an open structure. The RuvB hexamer acts as an ATP-dependent pump, pulling dsDNA into and through the RuvAB complex. RuvB forms 2 homohexamers on either side of HJ DNA bound by 1 or 2 RuvA tetramers; 4 subunits per hexamer contact DNA at a time. Coordinated motions by a converter formed by DNA-disengaged RuvB subunits stimulates ATP hydrolysis and nucleotide exchange. Immobilization of the converter enables RuvB to convert the ATP-contained energy into a lever motion, pulling 2 nucleotides of DNA out of the RuvA tetramer per ATP hydrolyzed, thus driving DNA branch migration. The RuvB motors rotate together with the DNA substrate, which together with the progressing nucleotide cycle form the mechanistic basis for DNA recombination by continuous HJ branch migration. Branch migration allows RuvC to scan DNA until it finds its consensus sequence, where it cleaves and resolves cruciform DNA. This chain is Holliday junction branch migration complex subunit RuvB, found in Cellvibrio japonicus (strain Ueda107) (Pseudomonas fluorescens subsp. cellulosa).